Here is a 248-residue protein sequence, read N- to C-terminus: Pulmonary surfactant-associated protein A2 (248 aa).

The signal sequence occupies residues 1-20; sequence MWLCPLALTLILMAASGAAC. Positions 28-100 constitute a Collagen-like domain; sequence GSPGIPGTPG…AGERGPPGLP (73 aa). Residues Pro30, Pro33, Pro36, Pro42, Pro54, Pro57, Pro63, Pro67, and Pro70 each carry the 4-hydroxyproline modification. Residues 33 to 101 are disordered; that stretch reads PGTPGSHGLP…GERGPPGLPA (69 aa). The span at 42 to 51 shows a compositional bias: basic and acidic residues; sequence PGRDGRDGVK. Residues 54-70 show a composition bias toward pro residues; the sequence is PGPPGPMGPPGETPCPP. Residues 71 to 82 are compositionally biased toward low complexity; the sequence is GNNGLPGAPGVP. The segment covering 84–93 has biased composition (basic and acidic residues); the sequence is ERGEKGEAGE. The C-type lectin domain occupies 132-248; sequence MTVGEKVFSS…LYSRLTICEF (117 aa). Intrachain disulfides connect Cys155/Cys246 and Cys224/Cys238. Asn207 carries N-linked (GlcNAc...) asparagine glycosylation.

Belongs to the SFTPA family. In terms of assembly, oligomeric complex of 6 set of homotrimers. Post-translationally, N-acetylated.

Its subcellular location is the secreted. It localises to the extracellular space. It is found in the extracellular matrix. The protein localises to the surface film. Its function is as follows. In presence of calcium ions, it binds to surfactant phospholipids and contributes to lower the surface tension at the air-liquid interface in the alveoli of the mammalian lung and is essential for normal respiration. In Homo sapiens (Human), this protein is Pulmonary surfactant-associated protein A2 (SFTPA2).